A 212-amino-acid polypeptide reads, in one-letter code: Ras-related protein Rab-15 (212 aa).

GTP is bound by residues Ser-17, Gly-18, Val-19, Gly-20, Lys-21, Thr-22, Cys-23, Ser-35, Ser-39, and Thr-40. A Mg(2+)-binding site is contributed by Thr-22. 2 consecutive short sequence motifs (switch) follow at residues 31 to 45 (NEFH…GVDF) and 63 to 80 (DTAG…YYRR). Mg(2+)-binding residues include Thr-40 and Asp-63. Gly-66, Asn-121, Lys-122, Asp-124, Ser-151, and Ala-152 together coordinate GTP. 2 S-geranylgeranyl cysteine lipidation sites follow: Cys-210 and Cys-212. Cys-212 carries the cysteine methyl ester modification.

Belongs to the small GTPase superfamily. Rab family. As to quaternary structure, the GTP bound form of RAB15 interacts with REP15. Interacts (GTP-bound form) with MICAL1, MICAL3, MICALCL, EHBP1 and EHBP1L1. It depends on Mg(2+) as a cofactor. As to expression, expressed predominantly in neural tissues.

The protein resides in the cell membrane. It catalyses the reaction GTP + H2O = GDP + phosphate + H(+). Regulated by guanine nucleotide exchange factors (GEFs) which promote the exchange of bound GDP for free GTP. Regulated by GTPase activating proteins (GAPs) which increase the GTP hydrolysis activity. Inhibited by GDP dissociation inhibitors (GDIs). Functionally, the small GTPases Rab are key regulators of intracellular membrane trafficking, from the formation of transport vesicles to their fusion with membranes. Rabs cycle between an inactive GDP-bound form and an active GTP-bound form that is able to recruit to membranes different sets of downstream effectors directly responsible for vesicle formation, movement, tethering and fusion. RAB15 may act in concert with RAB3A in regulating aspects of synaptic vesicle membrane flow within the nerve terminal. This chain is Ras-related protein Rab-15, found in Rattus norvegicus (Rat).